The following is a 740-amino-acid chain: NAD(P)H-quinone oxidoreductase subunit 5, chloroplastic (740 aa).

Transmembrane regions (helical) follow at residues 9–29 (WIIPFIPLPVPMLIGAGLILF), 40–60 (WAFQSVLLLSIVMVFSIYLSI), 89–109 (IDPLTSIMSILITTVGIMVLI), 125–145 (FAYMSFFSTSMLGLVTSSNLI), 147–167 (IYIFWELVGLCSYLLIGFWFT), 185–205 (GDFGLLLGILGFYWITGSFEF), 219–239 (NEVDFLFVTLCAVLLFAGAVA), 258–278 (TPISALIHAATMVAAGIFLVA), 286–306 (VIPYIMYLISVIGIITVLLGA), 327–347 (LGYMMLALGMGSYRSALFHLI), 354–374 (ALLFLGSGSIIHSMETIVGYS), 396–416 (ITFLLGTLSLCGIPPLACFWS), 425–445 (WLYSPIFAIIAWATAGLTAFY), 543–563 (LFPIFVLGLFTLFVGSLGIPF), 602–622 (VLSVSIAYFGIFIASFLYKPI), and 717–737 (SYLFLYLAYVLVFLLVYYLLF).

Belongs to the complex I subunit 5 family. As to quaternary structure, NDH is composed of at least 16 different subunits, 5 of which are encoded in the nucleus.

The protein localises to the plastid. Its subcellular location is the chloroplast thylakoid membrane. It carries out the reaction a plastoquinone + NADH + (n+1) H(+)(in) = a plastoquinol + NAD(+) + n H(+)(out). The enzyme catalyses a plastoquinone + NADPH + (n+1) H(+)(in) = a plastoquinol + NADP(+) + n H(+)(out). NDH shuttles electrons from NAD(P)H:plastoquinone, via FMN and iron-sulfur (Fe-S) centers, to quinones in the photosynthetic chain and possibly in a chloroplast respiratory chain. The immediate electron acceptor for the enzyme in this species is believed to be plastoquinone. Couples the redox reaction to proton translocation, and thus conserves the redox energy in a proton gradient. The polypeptide is NAD(P)H-quinone oxidoreductase subunit 5, chloroplastic (ndhF) (Nicotiana tomentosiformis (Tobacco)).